Consider the following 120-residue polypeptide: MFLNYFALGVLIFVFLVIFYGIIAIHDIPYLIAKKRNHPHADAIHTAGWVSLFTLHVIWPFLWIWATLYQPERGWGMQSHVASQEKATDPEIAALSDRISRLEHQLAAEKKTDYSTFPEI.

To E.coli YiaW.

This is an uncharacterized protein from Escherichia coli (strain K12).